Reading from the N-terminus, the 191-residue chain is NF-kappa-B inhibitor-interacting Ras-like protein 2 (191 aa).

Residues 1–191 are small GTPase-like; it reads MGKSCKVVVC…KNKGSGSVDG (191 aa). A GTP-binding site is contributed by 11 to 18; it reads GQAAVGKT. An Effector region motif is present at residues 35–43; that stretch reads MIETQEDIY. Residues 61–65 and 120–123 contribute to the GTP site; these read DTRGL and NKCD. The tract at residues 170-191 is disordered; that stretch reads QPQSKSAFPLSRKNKGSGSVDG.

The protein belongs to the small GTPase superfamily. Ras family. KappaB-Ras subfamily.

Its subcellular location is the cytoplasm. Functionally, atypical Ras-like protein that acts as a potent regulator of NF-kappa-B activity by preventing the degradation of NF-kappa-B inhibitor beta (NFKBIB) by most signals, explaining why NFKBIB is more resistant to degradation. The polypeptide is NF-kappa-B inhibitor-interacting Ras-like protein 2 (NKIRAS2) (Gallus gallus (Chicken)).